The primary structure comprises 230 residues: Large ribosomal subunit protein uL1 (230 aa).

It belongs to the universal ribosomal protein uL1 family. In terms of assembly, part of the 50S ribosomal subunit.

In terms of biological role, binds directly to 23S rRNA. The L1 stalk is quite mobile in the ribosome, and is involved in E site tRNA release. Functionally, protein L1 is also a translational repressor protein, it controls the translation of the L11 operon by binding to its mRNA. This chain is Large ribosomal subunit protein uL1, found in Bacillus mycoides (strain KBAB4) (Bacillus weihenstephanensis).